The chain runs to 316 residues: Sorting nexin-20 (316 aa).

The segment at 1 to 57 is disordered; it reads MASHKHPGSPGWTGPICQDMAGTTPKASAPRPDLPRPGPEDHLEAQGSPSSNSSMTT. The residue at position 3 (Ser-3) is a Phosphoserine. Positions 47–57 are enriched in polar residues; the sequence is GSPSSNSSMTT. The region spanning 74-191 is the PX domain; the sequence is VKLLFEIASA…DFLTRPELKE (118 aa). The a 1,2-diacyl-sn-glycero-3-phospho-(1D-myo-inositol-3-phosphate) site is built by Arg-116, Ser-118, Lys-143, and Arg-157.

The protein belongs to the sorting nexin family. In terms of assembly, interacts with SELPLG. Interaction with SELPLG is controversial.

The protein resides in the early endosome membrane. The protein localises to the cell membrane. It localises to the cytoplasm. Its subcellular location is the nucleus. Its function is as follows. May play a role in cellular vesicle trafficking. Has been proposed to function as a sorting protein that targets SELPLG into endosomes, but has no effect on SELPLG internalization from the cell surface, or on SELPLG-mediated cell-cell adhesion. The sequence is that of Sorting nexin-20 (SNX20) from Bos taurus (Bovine).